A 1000-amino-acid chain; its full sequence is Putative methyl-accepting chemotaxis protein sll0041 (1000 aa).

The tract at residues 1 to 59 is disordered; the sequence is MTQNPSSDRRPDTAQSVANGETLDGALFTGLTDTAAAQDESSETSASFATIDGEDKSEV. GAF domains follow at residues 342 to 478 and 509 to 650; these read EIQG…QTTL and NSEQ…GLAL. Residues 671–722 enclose the HAMP domain; it reads EKMQKRALELLMEVDPVSRGDLTIRAHVTEDEIGTIADSYNATIESLRRIVT. The region spanning 727-963 is the Methyl-accepting transducer domain; the sequence is AASQFTETTD…SVTQTMALVA (237 aa).

The protein belongs to the methyl-accepting chemotaxis (MCP) protein family.

The protein is Putative methyl-accepting chemotaxis protein sll0041 of Synechocystis sp. (strain ATCC 27184 / PCC 6803 / Kazusa).